A 716-amino-acid polypeptide reads, in one-letter code: Calpain clp-4 (716 aa).

The interval 31–53 (DDDDKQEAPVAVSKAPKGKGSNH) is disordered. Positions 240–536 (LFEDPEFPAT…FTQMEVCNLT (297 aa)) constitute a Calpain catalytic domain. Active-site residues include Cys295, His452, and Asn476.

Belongs to the peptidase C2 family.

Its function is as follows. Calcium-regulated non-lysosomal thiol-protease which catalyzes limited proteolysis of substrates. Promotes starvation-induced muscle atrophy. This chain is Calpain clp-4, found in Caenorhabditis elegans.